The sequence spans 357 residues: Inner membrane protein YcfT (357 aa).

Over 1 to 12 (MKQKELWINQIK) the chain is Cytoplasmic. Residues 13–33 (GLCICLVVIYHSVITFYPHLT) traverse the membrane as a helical segment. Residues 34-49 (TFQHPLSEVLSKCWIY) lie on the Periplasmic side of the membrane. A helical transmembrane segment spans residues 50–70 (FNLYLAPFRMPVFFFISGYLI). Over 71–86 (RRYIDSVPWGNCLDKR) the chain is Cytoplasmic. A helical transmembrane segment spans residues 87-107 (IWNIFWVLALWGVVQWLALSA). The Periplasmic segment spans residues 108–135 (LNQWLAPERDLSNASNAAYADSTGEFLH). The helical transmembrane segment at 136–156 (GMITASTSLWYLYALIVYFVV) threads the bilayer. Over 157-162 (CKIFSR) the chain is Cytoplasmic. The helical transmembrane segment at 163-183 (LALPLFALFVLLSVAVNFVPT) threads the bilayer. Residues 184 to 196 (PWWGMNSVIRNLP) are Periplasmic-facing. A helical transmembrane segment spans residues 197–217 (YYSLGAWFGATIMTCVKEVPL). The Cytoplasmic segment spans residues 218–231 (RRHLLMASLLTVLA). The chain crosses the membrane as a helical span at residues 232–252 (VGAWLFTISLLLSLVSIVVIM). At 253–310 (KLFYQYEQRFGMRSTSLLNVIGSNTIAIYTTHRILVEIFSLTLLAQMNAARWSPQVEL) the chain is on the periplasmic side. The helical transmembrane segment at 311–331 (TLLLVYPFVSLFICTVAGLLV) threads the bilayer. The Cytoplasmic segment spans residues 332 to 357 (RKLSQRAFSDLLFSPPSLPAAVSYSR).

It belongs to the acyltransferase 3 family.

It is found in the cell inner membrane. The polypeptide is Inner membrane protein YcfT (ycfT) (Escherichia coli (strain K12)).